A 572-amino-acid chain; its full sequence is Proline--tRNA ligase (572 aa).

This sequence belongs to the class-II aminoacyl-tRNA synthetase family. ProS type 1 subfamily. As to quaternary structure, homodimer.

The protein localises to the cytoplasm. The enzyme catalyses tRNA(Pro) + L-proline + ATP = L-prolyl-tRNA(Pro) + AMP + diphosphate. Functionally, catalyzes the attachment of proline to tRNA(Pro) in a two-step reaction: proline is first activated by ATP to form Pro-AMP and then transferred to the acceptor end of tRNA(Pro). As ProRS can inadvertently accommodate and process non-cognate amino acids such as alanine and cysteine, to avoid such errors it has two additional distinct editing activities against alanine. One activity is designated as 'pretransfer' editing and involves the tRNA(Pro)-independent hydrolysis of activated Ala-AMP. The other activity is designated 'posttransfer' editing and involves deacylation of mischarged Ala-tRNA(Pro). The misacylated Cys-tRNA(Pro) is not edited by ProRS. This Escherichia coli O17:K52:H18 (strain UMN026 / ExPEC) protein is Proline--tRNA ligase.